The following is a 286-amino-acid chain: Formamidopyrimidine-DNA glycosylase (286 aa).

P2 functions as the Schiff-base intermediate with DNA in the catalytic mechanism. Residue E3 is the Proton donor of the active site. The Proton donor; for beta-elimination activity role is filled by K61. Positions 96, 117, and 160 each coordinate DNA. An FPG-type zinc finger spans residues 246-280; it reads DAYGREGLPCRRCATPMRRRPWMNRSSYFCPKCQR. The active-site Proton donor; for delta-elimination activity is R270.

It belongs to the FPG family. Monomer. It depends on Zn(2+) as a cofactor.

It catalyses the reaction Hydrolysis of DNA containing ring-opened 7-methylguanine residues, releasing 2,6-diamino-4-hydroxy-5-(N-methyl)formamidopyrimidine.. It carries out the reaction 2'-deoxyribonucleotide-(2'-deoxyribose 5'-phosphate)-2'-deoxyribonucleotide-DNA = a 3'-end 2'-deoxyribonucleotide-(2,3-dehydro-2,3-deoxyribose 5'-phosphate)-DNA + a 5'-end 5'-phospho-2'-deoxyribonucleoside-DNA + H(+). In terms of biological role, involved in base excision repair of DNA damaged by oxidation or by mutagenic agents. Acts as a DNA glycosylase that recognizes and removes damaged bases. Has a preference for oxidized purines, such as 7,8-dihydro-8-oxoguanine (8-oxoG). Has AP (apurinic/apyrimidinic) lyase activity and introduces nicks in the DNA strand. Cleaves the DNA backbone by beta-delta elimination to generate a single-strand break at the site of the removed base with both 3'- and 5'-phosphates. This Streptomyces avermitilis (strain ATCC 31267 / DSM 46492 / JCM 5070 / NBRC 14893 / NCIMB 12804 / NRRL 8165 / MA-4680) protein is Formamidopyrimidine-DNA glycosylase.